Consider the following 208-residue polypeptide: Small ribosomal subunit protein uS5 (208 aa).

Residues 1–15 (MTDSNNQSPNKKTSG) show a composition bias toward polar residues. The interval 1 to 54 (MTDSNNQSPNKKTSGSSSAPPAADGRQENRRSRGEKRGGRRDRRGQERDSEWQE) is disordered. 2 stretches are compositionally biased toward basic and acidic residues: residues 25–37 (GRQE…GEKR) and 44–54 (RGQERDSEWQE). Residues 52–115 (WQERVVQIRR…ADGKKHLVRV (64 aa)) enclose the S5 DRBM domain.

It belongs to the universal ribosomal protein uS5 family. Part of the 30S ribosomal subunit. Contacts proteins S4 and S8.

Its function is as follows. With S4 and S12 plays an important role in translational accuracy. Located at the back of the 30S subunit body where it stabilizes the conformation of the head with respect to the body. This Prochlorococcus marinus (strain NATL2A) protein is Small ribosomal subunit protein uS5.